Here is a 623-residue protein sequence, read N- to C-terminus: DNA mismatch repair protein MutL (623 aa).

Over residues 353–368 (AQQSAPRPANSYSPAS) the composition is skewed to polar residues. The segment at 353–389 (AQQSAPRPANSYSPASWRTAPPAPRSEWSPQTAHPAH) is disordered.

It belongs to the DNA mismatch repair MutL/HexB family.

This protein is involved in the repair of mismatches in DNA. It is required for dam-dependent methyl-directed DNA mismatch repair. May act as a 'molecular matchmaker', a protein that promotes the formation of a stable complex between two or more DNA-binding proteins in an ATP-dependent manner without itself being part of a final effector complex. The polypeptide is DNA mismatch repair protein MutL (Brucella melitensis biotype 1 (strain ATCC 23456 / CCUG 17765 / NCTC 10094 / 16M)).